The primary structure comprises 542 residues: Global nitrogen regulator NrpR (542 aa).

A winged helix-turn-helix region spans residues 12-77 (IEILDILSKS…VITERGLEEL (66 aa)). 2 NRD regions span residues 85–320 (RLGS…KANI) and 321–542 (RIKT…YKEI).

It belongs to the NrpR family. As to quaternary structure, homodimer.

With respect to regulation, under nitrogen limitation, binding of the intracellular nitrogen metabolite 2-oxoglutarate to NrpR decreases the binding affinity of NrpR to DNA, leading to initiation of transcription. Its function is as follows. Transcriptional repressor of nitrogen fixation and assimilation genes. Binds to two tandem operators in the glnA and nif promoters, thereby blocking transcription of the genes. In Methanocaldococcus jannaschii (strain ATCC 43067 / DSM 2661 / JAL-1 / JCM 10045 / NBRC 100440) (Methanococcus jannaschii), this protein is Global nitrogen regulator NrpR.